The chain runs to 401 residues: MPRNIVVEEIVRTPVEMQKVELVERKGVGHPDSIADGIAEAVSRALSKEYIKRYGIILHHNTDQVEVVGGRAYPRFGGGEVVKPIYILLSGRAVELVDQELFPVHEVAIRAAKDYLNNTIRHLDVENHVVIDSRIGQGSVDLVSVFNKAKENPIPLANDTSFGVGFAPLTETERLVLETERLLNSEKFKKELPAVGEDVKVMGLRKGDEIDLTIAAAIVDSEVSGPKEYLEVKDKIREAVEELASDVTSRKVNVYVNTADDPDSGIFYITVTGTSAEAGDDGSVGRGNRVNGLITPNRHMSLEAAAGKNPVSHVGKIYNLLAMFIANEIAETLPVEEVYVRILSQIGKPIDQPLIASIQIIPKQGHSVKEFEKDAYAIADNWLANITKIQKMILEGKVSVF.

136-141 (GQGSVD) serves as a coordination point for ATP.

It belongs to the AdoMet synthase 2 family. Requires Mg(2+) as cofactor.

The catalysed reaction is L-methionine + ATP + H2O = S-adenosyl-L-methionine + phosphate + diphosphate. Its pathway is amino-acid biosynthesis; S-adenosyl-L-methionine biosynthesis; S-adenosyl-L-methionine from L-methionine: step 1/1. Catalyzes the formation of S-adenosylmethionine from methionine and ATP. The sequence is that of S-adenosylmethionine synthase (mat) from Pyrococcus horikoshii (strain ATCC 700860 / DSM 12428 / JCM 9974 / NBRC 100139 / OT-3).